The sequence spans 113 residues: Protein NATD1 (113 aa).

Residues 22–112 enclose the N-acetyltransferase domain; that stretch reads EHDRRRRQFT…PLPQYLERLQ (91 aa).

The protein belongs to the NATD1 family.

This is Protein NATD1 (NATD1) from Homo sapiens (Human).